The sequence spans 307 residues: Cytidine deaminase 7 (307 aa).

CMP/dCMP-type deaminase domains follow at residues 22-155 (TEPI…FTPD) and 185-307 (SDCS…FITE). 63 to 65 (NVE) serves as a coordination point for substrate. Residue histidine 76 participates in Zn(2+) binding. Glutamate 78 serves as the catalytic Proton donor. Cysteine 111 and cysteine 114 together coordinate Zn(2+).

The protein belongs to the cytidine and deoxycytidylate deaminase family. As to quaternary structure, homodimer. Zn(2+) serves as cofactor.

The enzyme catalyses cytidine + H2O + H(+) = uridine + NH4(+). It catalyses the reaction 2'-deoxycytidine + H2O + H(+) = 2'-deoxyuridine + NH4(+). Functionally, this enzyme scavenges exogenous and endogenous cytidine and 2'-deoxycytidine for UMP synthesis. The sequence is that of Cytidine deaminase 7 (CDA7) from Arabidopsis thaliana (Mouse-ear cress).